The primary structure comprises 223 residues: Putative HTLV-1-related endogenous sequence (223 aa).

Positions 1 to 19 are enriched in low complexity; it reads MRCAHAPAPRTRYPTRAPS. The segment at 1–184 is disordered; the sequence is MRCAHAPAPR…ARAHGEAGAG (184 aa). The segment covering 115–126 has biased composition (basic and acidic residues); the sequence is GDRRREGPDRSP. The span at 133–157 shows a compositional bias: low complexity; sequence PAAAAQPDSSSAQAPGPSTLRPAAT.

In Homo sapiens (Human), this protein is Putative HTLV-1-related endogenous sequence (HRES1).